The primary structure comprises 632 residues: ATP-dependent zinc metalloprotease FtsH (632 aa).

Residues 1–9 lie on the Cytoplasmic side of the membrane; that stretch reads MKPTNEPKK. Residues 10–30 form a helical membrane-spanning segment; it reads PFFQSPIVLAVLGGILLIFFL. The Periplasmic portion of the chain corresponds to 31–116; sequence RSFNSDGSFS…INYSGFSESN (86 aa). A helical membrane pass occupies residues 117 to 137; that stretch reads FFTDMLGWLMPILVILGLWMF. Residues 138–632 are Cytoplasmic-facing; the sequence is MANRMQKNMG…RLIPLEEQAS (495 aa). An ATP-binding site is contributed by 210-217; the sequence is GPPGTGKT. H434 is a Zn(2+) binding site. E435 is an active-site residue. Residues H438 and D511 each coordinate Zn(2+).

In the central section; belongs to the AAA ATPase family. It in the C-terminal section; belongs to the peptidase M41 family. As to quaternary structure, homohexamer. The cofactor is Zn(2+).

It is found in the cell inner membrane. In terms of biological role, acts as a processive, ATP-dependent zinc metallopeptidase for both cytoplasmic and membrane proteins. Plays a role in the quality control of integral membrane proteins. The sequence is that of ATP-dependent zinc metalloprotease FtsH from Helicobacter pylori (strain J99 / ATCC 700824) (Campylobacter pylori J99).